The chain runs to 562 residues: Urocanate hydratase (562 aa).

NAD(+) is bound by residues 52-53 (GG), Q130, 176-178 (GMG), E196, R201, 242-243 (NA), 263-267 (QTSAH), 273-274 (YL), and Y322. C410 is a catalytic residue. G492 contacts NAD(+).

This sequence belongs to the urocanase family. Requires NAD(+) as cofactor.

The protein resides in the cytoplasm. The enzyme catalyses 4-imidazolone-5-propanoate = trans-urocanate + H2O. Its pathway is amino-acid degradation; L-histidine degradation into L-glutamate; N-formimidoyl-L-glutamate from L-histidine: step 2/3. Catalyzes the conversion of urocanate to 4-imidazolone-5-propionate. This chain is Urocanate hydratase, found in Klebsiella pneumoniae subsp. pneumoniae (strain ATCC 700721 / MGH 78578).